A 123-amino-acid chain; its full sequence is Ig heavy chain V region HPCG13 (123 aa).

Residues 1-114 form the Ig-like domain; it reads EVKLVESGGG…GSYWYFDVWG (114 aa).

The polypeptide is Ig heavy chain V region HPCG13 (Mus musculus (Mouse)).